Reading from the N-terminus, the 467-residue chain is MTNWQGKNVTVAGLGVSGIPAARVLHGLGAVVTVVNDGDDERSRAQAADLEALGITVRLGDGATLPEGTELIVTTPGWQPDKPLFAAAAEAGVPVWGDVELAWRLRGPGSAPWLAVTGTNGKTTTVQMLASILTAAGLRTAAVGNIGVSLLDAVLGEETYDVLAVELSSYQLHWAPSLRAHSATVLNIAPDHLDWHGSMEAYTADKGRIYEGNRVACVYNVADKATEDLVRAADVEEGCRAVGFTLGTPGPSQLGVVEGILVDRAFVEDRQKNAQELAEVADVHPPAPHNIANALAAAALARAFGVPASAVRDGLRAFRPDAHRIAHVADVDGVTYIDDSKATNTHAAEASLAAYGSIVWIAGGLAKGASFDELVAKSAQRLRGVVLIGADRALIREALARHAPEVPVVDLDRTDTGAMPAAVQEARRLAVAGDTVLLAPACASMDMFANYNKRGDAFAEAVRGLGA.

Glycine 118–threonine 124 provides a ligand contact to ATP.

This sequence belongs to the MurCDEF family.

It localises to the cytoplasm. It catalyses the reaction UDP-N-acetyl-alpha-D-muramoyl-L-alanine + D-glutamate + ATP = UDP-N-acetyl-alpha-D-muramoyl-L-alanyl-D-glutamate + ADP + phosphate + H(+). It participates in cell wall biogenesis; peptidoglycan biosynthesis. Cell wall formation. Catalyzes the addition of glutamate to the nucleotide precursor UDP-N-acetylmuramoyl-L-alanine (UMA). The polypeptide is UDP-N-acetylmuramoylalanine--D-glutamate ligase (Streptomyces avermitilis (strain ATCC 31267 / DSM 46492 / JCM 5070 / NBRC 14893 / NCIMB 12804 / NRRL 8165 / MA-4680)).